The chain runs to 386 residues: Homeobox protein Hox-A13 (386 aa).

A DNA-binding region (homeobox) is located at residues 320–379; the sequence is GRKKRVPYTKVQLKELEREYATNKFITKDKRRRISATTNLSERQVTIWFQNRRVKEKKVI.

Belongs to the Abd-B homeobox family. In terms of assembly, binds DNA as a homodimer. Interacts with MEIS1, MEIS2 and MEIS3.

The protein resides in the nucleus. Sequence-specific, AT-rich binding transcription factor which is part of a developmental regulatory system that provides cells with specific positional identities on the anterior-posterior axis. This chain is Homeobox protein Hox-A13 (Hoxa13), found in Mus musculus (Mouse).